Here is an 88-residue protein sequence, read N- to C-terminus: Small ribosomal subunit protein bS18B (88 aa).

It belongs to the bacterial ribosomal protein bS18 family. Part of the 30S ribosomal subunit. Forms a tight heterodimer with protein bS6.

Binds as a heterodimer with protein bS6 to the central domain of the 16S rRNA, where it helps stabilize the platform of the 30S subunit. This chain is Small ribosomal subunit protein bS18B, found in Mycolicibacterium paratuberculosis (strain ATCC BAA-968 / K-10) (Mycobacterium paratuberculosis).